The following is a 419-amino-acid chain: Phospholipase A1-IIgamma (419 aa).

Coiled-coil stretches lie at residues 1–21 (MKRK…EFAK) and 207–227 (NARD…KDEE). Ser-236 functions as the Acyl-ester intermediate in the catalytic mechanism. Residues Ser-236, Asp-302, and His-339 each act as charge relay system in the active site.

This sequence belongs to the AB hydrolase superfamily. Lipase family. As to expression, expressed in seedlings, stems and siliques, and, to a lower extent, in flowers.

It is found in the cytoplasm. Acylhydrolase that catalyzes the hydrolysis of 1,3-diacylglycerol (1,3-DAG) and 1-monoacylglycerol (1-MAG) at the sn-1 position. High activity toward 1,3-DAG and 1-MAG, but low activity toward 1,2-diacylglycerol (1,2-DAG) and 1-lysophosphatidylcholine (1-LPC), and no activity toward phosphatidylcholine (PC), monogalactosyldiacylglycerol (MGDG), digalactosyldiacylglycerol (DGDG), triacylglycerol (TAG) and 2-monoacylglycerol (2-MAG). May be involved in the negative regulation of seedling establishment by inhibiting the breakdown, beta-oxidation and mobilization of seed storage oils. This chain is Phospholipase A1-IIgamma (DSEL), found in Arabidopsis thaliana (Mouse-ear cress).